Reading from the N-terminus, the 398-residue chain is Na(+)/H(+) antiporter NhaA (398 aa).

12 helical membrane-spanning segments follow: residues 9-29 (MITHPAAGGVLLFAAALAAIV), 57-77 (LSLLVLVNDGLMAVFFLAVGL), 95-115 (AFPAIAALGGMVAPAVIYSLM), 124-144 (AGWAIPAATDIAFAVGVLALL), 154-174 (VFMLALAIIDDLGAIVIIALF), 177-197 (TALEPLALAAAGAVIGIMALM), 204-224 (FLSLYLLLGAVLWGCILLSGI), 226-246 (ATLAGVVVGGLIPLTLPSTEV), 255-275 (WLQPWVVYLILPLFAFANAGI), 288-308 (FLPLGIAAGLVVGKPLGIVLF), 329-349 (IAAAAMLCGIGFTMSIFIANL), and 359-379 (IVLAKVGILSGSVIAALLGYL).

This sequence belongs to the NhaA Na(+)/H(+) (TC 2.A.33) antiporter family.

It is found in the cell inner membrane. The catalysed reaction is Na(+)(in) + 2 H(+)(out) = Na(+)(out) + 2 H(+)(in). Functionally, na(+)/H(+) antiporter that extrudes sodium in exchange for external protons. In Sodalis glossinidius (strain morsitans), this protein is Na(+)/H(+) antiporter NhaA.